The primary structure comprises 368 residues: N-acetylneuraminate epimerase (368 aa).

Residues 1 to 19 form the signal peptide; the sequence is MNKTIMALAIMMASFAANA. 7 Kelch repeats span residues 40-84, 86-137, 139-173, 174-219, 222-265, 287-336, and 338-367; these read TVYI…AFID, NLYV…FVHN, KAYV…KINA, HYFD…VNKG, TWLI…VAGG, ENYQ…PWNN, and LLII…VTVQ. Glu228 acts as the Proton acceptor in catalysis.

Belongs to the NanM family. As to quaternary structure, homodimer.

The protein resides in the periplasm. The enzyme catalyses N-acetyl-alpha-neuraminate = N-acetyl-beta-neuraminate. Converts alpha-N-acetylneuranimic acid (Neu5Ac) to the beta-anomer, accelerating the equilibrium between the alpha- and beta-anomers. Probably facilitates sialidase-negative bacteria to compete successfully for limited amounts of extracellular Neu5Ac, which is likely taken up in the beta-anomer. In addition, the rapid removal of sialic acid from solution might be advantageous to the bacterium to damp down host responses. The sequence is that of N-acetylneuraminate epimerase from Shigella sonnei (strain Ss046).